The following is a 115-amino-acid chain: UPF0125 protein VP0646 (115 aa).

A disordered region spans residues 92–115 (RAEQAKAAGNADPVTGGKPNALRK).

This sequence belongs to the UPF0125 (RnfH) family.

In Vibrio parahaemolyticus serotype O3:K6 (strain RIMD 2210633), this protein is UPF0125 protein VP0646.